The following is a 150-amino-acid chain: Large ribosomal subunit protein bL9 (150 aa).

It belongs to the bacterial ribosomal protein bL9 family.

In terms of biological role, binds to the 23S rRNA. In Paracidovorax citrulli (strain AAC00-1) (Acidovorax citrulli), this protein is Large ribosomal subunit protein bL9.